Here is a 30-residue protein sequence, read N- to C-terminus: U10-ctenitoxin-Co1b (30 aa).

Intrachain disulfides connect Cys2–Cys17 and Cys9–Cys22.

In terms of tissue distribution, expressed by the venom gland.

It localises to the secreted. Antagonist of L-type calcium channels (Cav1/CACNA1). The polypeptide is U10-ctenitoxin-Co1b (Ctenus ornatus (Brazilian spider)).